The chain runs to 130 residues: Small ribosomal subunit protein uS11c (130 aa).

Belongs to the universal ribosomal protein uS11 family. As to quaternary structure, part of the 30S ribosomal subunit.

Its subcellular location is the plastid. The protein resides in the chloroplast. This is Small ribosomal subunit protein uS11c from Anthoceros angustus (Hornwort).